Consider the following 617-residue polypeptide: mRNA export factor MEX67 (617 aa).

Residues 1–10 (MSYRGRGGGY) are compositionally biased toward gly residues. The interval 1–24 (MSYRGRGGGYNNNRGQFSSGPHQH) is disordered. LRR repeat units lie at residues 185 to 206 (DVDS…TSMA), 211 to 232 (KLQN…ETWR), and 237 to 258 (FLRE…AEIQ). Positions 309-499 (LATNFIANYL…MIVASDTLLI (191 aa)) constitute an NTF2 domain. Disordered regions lie at residues 442–469 (EVDG…HKRI) and 513–554 (LPSN…TTAD). 2 stretches are compositionally biased toward low complexity: residues 445 to 459 (GSAS…GGSR) and 526 to 542 (ATST…TTPQ). Residues 565–617 (QIQQELLVKILLETKLNINYGIMLCEQSNWDYQQASVNFKNSAASLPSDAFVQ) enclose the TAP-C domain.

It belongs to the NXF family. Interacts with nucleoporin complex protein MTR2.

The protein localises to the nucleus. It localises to the cytoplasm. Involved in the export of mRNA from the nucleus to the cytoplasm. The protein is mRNA export factor MEX67 of Candida albicans (strain SC5314 / ATCC MYA-2876) (Yeast).